Reading from the N-terminus, the 127-residue chain is Large ribosomal subunit protein bL20 (127 aa).

It belongs to the bacterial ribosomal protein bL20 family.

Its function is as follows. Binds directly to 23S ribosomal RNA and is necessary for the in vitro assembly process of the 50S ribosomal subunit. It is not involved in the protein synthesizing functions of that subunit. This is Large ribosomal subunit protein bL20 from Bifidobacterium longum (strain NCC 2705).